The chain runs to 277 residues: uncharacterized protein (277 aa).

Transmembrane regions (helical) follow at residues 46-66, 73-93, 143-163, 174-194, and 228-248; these read IAAI…YGGL, LFEG…ILWM, TTVI…VLIL, FFYA…GYGT, and KGLI…MEWV.

The protein belongs to the oxidase-dependent Fe transporter (OFeT) (TC 9.A.10.1) family.

The protein localises to the cell membrane. This is an uncharacterized protein from Archaeoglobus fulgidus (strain ATCC 49558 / DSM 4304 / JCM 9628 / NBRC 100126 / VC-16).